Here is a 61-residue protein sequence, read N- to C-terminus: Small ribosomal subunit protein uS14 (61 aa).

4 residues coordinate Zn(2+): Cys24, Cys27, Cys40, and Cys43.

This sequence belongs to the universal ribosomal protein uS14 family. Zinc-binding uS14 subfamily. Part of the 30S ribosomal subunit. Contacts proteins S3 and S10. Zn(2+) serves as cofactor.

Its function is as follows. Binds 16S rRNA, required for the assembly of 30S particles and may also be responsible for determining the conformation of the 16S rRNA at the A site. The protein is Small ribosomal subunit protein uS14 of Pelobacter propionicus (strain DSM 2379 / NBRC 103807 / OttBd1).